Here is a 1053-residue protein sequence, read N- to C-terminus: Serine/threonine-protein phosphatase 6 regulatory ankyrin repeat subunit A (1053 aa).

ANK repeat units follow at residues Glu-40–Ala-69, Lys-73–Ala-102, Asn-106–Val-135, Ala-139–Ala-168, Lys-172–Cys-201, Lys-205–Glu-234, Tyr-238–Gln-267, Lys-271–Met-301, Asp-305–Cys-334, Asn-338–Lys-367, His-371–Thr-400, Phe-404–Lys-433, Phe-437–Asp-466, Arg-470–Ile-500, Gln-504–Met-534, Ala-549–Val-578, Ser-582–Val-611, Leu-616–Ala-645, Asn-652–Ala-681, Trp-685–Leu-714, Arg-718–Ala-747, His-755–Gly-786, Ala-788–Asn-817, Lys-822–Ser-851, Thr-855–Leu-885, Ser-889–Leu-918, and Ala-925–Ala-954. Ser-1007 and Ser-1011 each carry phosphoserine.

As to quaternary structure, protein phosphatase 6 (PP6) holoenzyme is proposed to be a heterotrimeric complex formed by the catalytic subunit, a SAPS domain-containing subunit (PP6R) and an ankyrin repeat-domain containing regulatory subunit (ARS). Interacts with PPP1C and HNRPK. Interacts with PPP6C, PPP6R1 and PPP6R3. Post-translationally, ubiquitinated by the ECS(RAB40C) complex leading to its degradation and decreased PP6 activity. In terms of tissue distribution, widely expressed (at protein level).

The protein resides in the nucleus. It localises to the nucleoplasm. It is found in the cytoplasm. Its subcellular location is the cytosol. The protein localises to the cell projection. The protein resides in the lamellipodium. Putative regulatory subunit of protein phosphatase 6 (PP6) that may be involved in the recognition of phosphoprotein substrates. Involved in the PP6-mediated dephosphorylation of NFKBIE opposing its degradation in response to TNF-alpha. Selectively inhibits the phosphatase activity of PPP1C. Targets PPP1C to modulate HNRPK phosphorylation. Involved in the PP6-mediated dephosphorylation of MOB1 and induced focal adhesion assembly during cell migration. The sequence is that of Serine/threonine-protein phosphatase 6 regulatory ankyrin repeat subunit A (Ankrd28) from Mus musculus (Mouse).